Here is an 83-residue protein sequence, read N- to C-terminus: Non-muscle caldesmon (83 aa).

2 stretches are compositionally biased toward basic and acidic residues: residues 1 to 44 and 62 to 76; these read QTSE…KEEK and NQLKDEKTKKDKESK. The tract at residues 1-63 is myosin and calmodulin-binding; sequence QTSEKEGRSE…PKPGSIEENQ (63 aa). The disordered stretch occupies residues 1–83; the sequence is QTSEKEGRSE…ESKNILSLCL (83 aa).

Post-translationally, in non-muscle cells, phosphorylation by CDC2 during mitosis causes caldesmon to dissociate from microfilaments. Phosphorylation reduces caldesmon binding to actin, myosin, and calmodulin as well as its inhibition of actomyosin ATPase activity. Phosphorylation also occurs in both quiescent and dividing smooth muscle cells with similar effects on the interaction with actin and calmodulin and on microfilaments reorganization.

The protein resides in the cytoplasm. Its subcellular location is the cytoskeleton. It is found in the myofibril. The protein localises to the stress fiber. Its function is as follows. Actin- and myosin-binding protein implicated in the regulation of actomyosin interactions in smooth muscle and nonmuscle cells (could act as a bridge between myosin and actin filaments). Stimulates actin binding of tropomyosin which increases the stabilization of actin filament structure. In muscle tissues, inhibits the actomyosin ATPase by binding to F-actin. This inhibition is attenuated by calcium-calmodulin and is potentiated by tropomyosin. Interacts with actin, myosin, two molecules of tropomyosin and with calmodulin. Also plays an essential role during cellular mitosis and receptor capping. The sequence is that of Non-muscle caldesmon (CALD1) from Bos taurus (Bovine).